The chain runs to 943 residues: Neutral alpha-glucosidase AB (943 aa).

The signal sequence occupies residues 1 to 23 (MRKLVILIILSIVCSLFIGSIES). The tract at residues 186-231 (FEPISDKPQPLPPKEKKSEEENKEANQEEDNNNNNNDNNEEQQVST) is disordered. Residues 198 to 211 (PKEKKSEEENKEAN) are compositionally biased toward basic and acidic residues. Catalysis depends on D540, which acts as the Nucleophile. The active site involves E543. D617 serves as the catalytic Proton donor. 3 N-linked (GlcNAc...) asparagine glycosylation sites follow: N878, N887, and N907.

Belongs to the glycosyl hydrolase 31 family.

It is found in the endoplasmic reticulum. Its subcellular location is the golgi apparatus. The enzyme catalyses N(4)-(alpha-D-Glc-(1-&gt;3)-alpha-D-Man-(1-&gt;2)-alpha-D-Man-(1-&gt;2)-alpha-D-Man-(1-&gt;3)-[alpha-D-Man-(1-&gt;2)-alpha-D-Man-(1-&gt;3)-[alpha-D-Man-(1-&gt;2)-alpha-D-Man-(1-&gt;6)]-alpha-D-Man-(1-&gt;6)]-beta-D-Man-(1-&gt;4)-beta-D-GlcNAc-(1-&gt;4)-beta-D-GlcNAc)-L-asparaginyl-[protein] + H2O = N(4)-(alpha-D-Man-(1-&gt;2)-alpha-D-Man-(1-&gt;2)-alpha-D-Man-(1-&gt;3)-[alpha-D-Man-(1-&gt;2)-alpha-D-Man-(1-&gt;3)-[alpha-D-Man-(1-&gt;2)-alpha-D-Man-(1-&gt;6)]-alpha-D-Man-(1-&gt;6)]-beta-D-Man-(1-&gt;4)-beta-D-GlcNAc-(1-&gt;4)-beta-D-GlcNAc)-L-asparaginyl-[protein] (N-glucan mannose isomer 9A1,2,3B1,2,3) + beta-D-glucose. It catalyses the reaction N(4)-(alpha-D-Glc-(1-&gt;3)-alpha-D-Glc-(1-&gt;3)-alpha-D-Man-(1-&gt;2)-alpha-D-Man-(1-&gt;2)-alpha-D-Man-(1-&gt;3)-[alpha-D-Man-(1-&gt;2)-alpha-D-Man-(1-&gt;3)-[alpha-D-Man-(1-&gt;2)-alpha-D-Man-(1-&gt;6)]-alpha-D-Man-(1-&gt;6)]-beta-D-Man-(1-&gt;4)-beta-D-GlcNAc-(1-&gt;4)-beta-D-GlcNAc)-L-asparaginyl-[protein] + H2O = N(4)-(alpha-D-Glc-(1-&gt;3)-alpha-D-Man-(1-&gt;2)-alpha-D-Man-(1-&gt;2)-alpha-D-Man-(1-&gt;3)-[alpha-D-Man-(1-&gt;2)-alpha-D-Man-(1-&gt;3)-[alpha-D-Man-(1-&gt;2)-alpha-D-Man-(1-&gt;6)]-alpha-D-Man-(1-&gt;6)]-beta-D-Man-(1-&gt;4)-beta-D-GlcNAc-(1-&gt;4)-beta-D-GlcNAc)-L-asparaginyl-[protein] + beta-D-glucose. Its pathway is glycan metabolism; N-glycan metabolism. Cleaves sequentially the 2 innermost alpha-1,3-linked glucose residues from N-linked oligosaccharides on newly synthesized glycoproteins. This Dictyostelium discoideum (Social amoeba) protein is Neutral alpha-glucosidase AB (modA).